We begin with the raw amino-acid sequence, 202 residues long: Large ribosomal subunit protein bL17 (202 aa).

The interval 132–202 (DAAQKAASAG…TEVEKADDDK (71 aa)) is disordered. Positions 134 to 168 (AQKAASAGAQEVTAAAAPQAAVEPEAVETEASAET) are enriched in low complexity. Acidic residues predominate over residues 169-193 (AEAEVETAEVEAVDEASAEEADEAT).

The protein belongs to the bacterial ribosomal protein bL17 family. In terms of assembly, part of the 50S ribosomal subunit. Contacts protein L32.

This is Large ribosomal subunit protein bL17 from Mycolicibacterium vanbaalenii (strain DSM 7251 / JCM 13017 / BCRC 16820 / KCTC 9966 / NRRL B-24157 / PYR-1) (Mycobacterium vanbaalenii).